We begin with the raw amino-acid sequence, 190 residues long: MDADSDVALDILITNVVCVFRTRCHLNLRKIALEGANVIYKRDVGKVLMKLRKPRITATIWSSGKIICTGATSEEEAKFGARRLARSLQKLGFQVIFTDFKVVNVLAVCNMPFEIRLPEFTKNNRPHASYEPELHPAVCYRIKSLRATLQIFSTGSITVTGPNVKAVATAVEQIYPFVFESRKEILSFTT.

It belongs to the TBP family. In terms of assembly, binds TFIIA and TFIIB.

It is found in the cytoplasm. The protein localises to the nucleus. Part of a specialized transcription system that mediates the transcription of most ribosomal proteins through the 5'-TCT-3' motif which is a core promoter element at these genes. Seems to also mediate the transcription of NF1. Does not bind the TATA box. The chain is TATA box-binding protein-like 1 (TBPL1) from Pongo abelii (Sumatran orangutan).